A 636-amino-acid polypeptide reads, in one-letter code: p-hydroxybenzoate-m-hydroxylase A (636 aa).

FAD contacts are provided by residues 10 to 39, 241 to 243, Tyr289, and Asp310; these read DIVIVGAGPVGIVLSLCMSRWGYKVKHIDN and RLY. A helical transmembrane segment spans residues 11-28; that stretch reads IVIVGAGPVGIVLSLCMS.

Belongs to the PheA/TfdB FAD monooxygenase family. It depends on FAD as a cofactor.

It localises to the membrane. The enzyme catalyses 4-hydroxybenzoate + NADH + O2 + H(+) = 3,4-dihydroxybenzoate + NAD(+) + H2O. It carries out the reaction 4-hydroxybenzoate + NADPH + O2 + H(+) = 3,4-dihydroxybenzoate + NADP(+) + H2O. Functionally, FAD-dependent monooxygenase; part of the benzoic acid degradation pathway also known as the protocatechuic acid pathway. Benzoic acid debradation begins with the conversion of benzoic acid into 4-hydroxybenzoic acid through hydroxylation by the benzoate-4-monooxygenase bphA, and its partner NADPH-cytochrome P450 reductase cprA which act as a mediator in electron donation from NADPH. 4-Hydroxybenzoic acid is then converted into 3,4-dihydroxybenzoic acid (also called protocatechuic acid) by the p-hydroxybenzoate-m-hydroxylase phhA. Protocatechuic acid is converted into 3-carboxy-cis,cis-muconic acid by the intradiol ring-cleavage dioxygenase prcA, which is further metabolized through the 3-oxoadipate pathway to finally enter the tricarboxylic acid cycle (TCA). This is p-hydroxybenzoate-m-hydroxylase A from Aspergillus niger (strain ATCC MYA-4892 / CBS 513.88 / FGSC A1513).